Consider the following 221-residue polypeptide: uncharacterized protein (221 aa).

Low complexity-rich tracts occupy residues M1–N27 and T140–S162. 2 disordered regions span residues M1–E28 and T140–G205.

This is an uncharacterized protein from Dictyostelium discoideum (Social amoeba).